Consider the following 419-residue polypeptide: Putative actin-fragmin kinase DDB_G0279609 (419 aa).

A disordered region spans residues 73-94; it reads INNNNNSINNNNNNNNKNKNKN.

It belongs to the protein kinase superfamily. AFK Ser/Thr protein kinase family.

In Dictyostelium discoideum (Social amoeba), this protein is Putative actin-fragmin kinase DDB_G0279609.